The sequence spans 596 residues: Probable lysosomal cobalamin transporter (596 aa).

10 helical membrane-spanning segments follow: residues 7–27 (AFIWVAYAVAVGIVALIAAIF), 46–66 (IITLTSLLATVLLLPVDIALV), 95–115 (IVYYALYSLDAVLCLLVIPFT), 145–165 (TLFFVVLVVILFLVGFFAPVA), 196–216 (LLISLGTLLYILYTSVGLALL), 313–333 (LVGGILLLLLSVIIWASMLIT), 350–370 (ILGSINIFQPLNWVFVKSSIV), 376–396 (VLMALLVLFLFSSSVTGIAVI), 420–440 (MATVMLTLIILAINYSIAMII), and 507–527 (FFGALAFWAQFVFLAIFLIVF). The interval 566–596 (WQDIRGKAKNQTPSRGAAGRGIRGDDDHDDD) is disordered. Over residues 587–596 (IRGDDDHDDD) the composition is skewed to basic and acidic residues.

This sequence belongs to the LIMR family. LMBRD1 subfamily.

It is found in the lysosome membrane. Probable lysosomal cobalamin transporter. Required to export cobalamin from lysosomes allowing its conversion to cofactors. The sequence is that of Probable lysosomal cobalamin transporter from Sclerotinia sclerotiorum (strain ATCC 18683 / 1980 / Ss-1) (White mold).